Consider the following 368-residue polypeptide: Glycolate oxidase 2 (368 aa).

Residues 1 to 360 (MALVTNVCEY…TRGHVVTESD (360 aa)) enclose the FMN hydroxy acid dehydrogenase domain. FMN is bound by residues 78 to 80 (PTA), Ser107, 128 to 130 (QLS), and Thr156. Arg165 provides a ligand contact to glyoxylate. Residues Lys231 and Ser253 each coordinate FMN. Residues His255 and Arg258 each coordinate glyoxylate. The Proton acceptor role is filled by His255. FMN contacts are provided by residues 286–290 (DSGFR) and 309–310 (GR). A Microbody targeting signal motif is present at residues 366–368 (SRL).

Belongs to the FMN-dependent alpha-hydroxy acid dehydrogenase family. As to quaternary structure, homotetramer. The cofactor is FMN.

Its subcellular location is the peroxisome. It carries out the reaction glycolate + O2 = glyoxylate + H2O2. It functions in the pathway photosynthesis; photorespiration; glycine from 2-phosphoglycolate: step 2/3. Functionally, catalyzes the oxidation of glycolate to glyoxylate, with a reduction of O2 to H2O2. Is a key enzyme in photorespiration in green plants. The polypeptide is Glycolate oxidase 2 (GLO2) (Oryza sativa subsp. indica (Rice)).